A 325-amino-acid chain; its full sequence is MKLMNKIIVPVTASALLLGACGSNATESKDNTLISSKAGDVKVADVMKKMGKEQIANTSFSIVLNKVLADKYKDKVDTKDIDKDIKKEEKQYGGKDQFESMLKQQGMSLDDYKEQKKLSAYQKQLLLDKVNVSDKEIKENSKKTSHILIKVKSKSSDKEGLSDKKAKEKAEKIQKEVEKNPNKFGEIAKKESMDSSSAKKDGSLGYVIKGQMVDSFEKALFKLKEGEVSKVVKTDYGYHIIKADKETDFNSEKSNIKQKLIEEKVQKKPKLLTDAYKELLKEYKVDYKDRDIKKAIEDSILDPDKIKQQQQQQSQGGSGLTNSGS.

The N-terminal stretch at 1 to 20 (MKLMNKIIVPVTASALLLGA) is a signal peptide. Cysteine 21 is lipidated: N-palmitoyl cysteine. Residue cysteine 21 is the site of S-diacylglycerol cysteine attachment. The 107-residue stretch at 139-245 (ENSKKTSHIL…YGYHIIKADK (107 aa)) folds into the PpiC domain. Disordered stretches follow at residues 159–200 (EGLS…SAKK) and 303–325 (PDKI…NSGS).

This sequence belongs to the PrsA family.

The protein resides in the cell membrane. It carries out the reaction [protein]-peptidylproline (omega=180) = [protein]-peptidylproline (omega=0). Functionally, plays a major role in protein secretion by helping the post-translocational extracellular folding of several secreted proteins. The protein is Foldase protein PrsA of Staphylococcus epidermidis (strain ATCC 35984 / DSM 28319 / BCRC 17069 / CCUG 31568 / BM 3577 / RP62A).